Here is a 129-residue protein sequence, read N- to C-terminus: Small ribosomal subunit protein uS11 (129 aa).

It belongs to the universal ribosomal protein uS11 family. Part of the 30S ribosomal subunit. Interacts with proteins S7 and S18. Binds to IF-3.

Located on the platform of the 30S subunit, it bridges several disparate RNA helices of the 16S rRNA. Forms part of the Shine-Dalgarno cleft in the 70S ribosome. This Pseudomonas putida (strain GB-1) protein is Small ribosomal subunit protein uS11.